The primary structure comprises 273 residues: MSTIRPVFYVSDGTGITAETIGHSLLTQFSGFSFITDRMSFVDDPEKAREACSRIQAAGERYQVRPIVVNSCVDQSLSLILAESGALMLDVFAPFIEPLERELSSSRVNRVGQAHGMVDFDTYHRRINAMNFALTHDDGIAVNYDDADVILVAVSRAGKTPTCIYLALHYGVRAANYPLTDEDLESDRLPPRLRNYRRKLFGLTIDPDRLQQIRQERRPNSRYANLDTCKREVAAAEVMFQMERIPTLSTTHTSIEEISSKVLATLGLQRELY.

153–160 (AVSRAGKT) serves as a coordination point for ADP.

It belongs to the pyruvate, phosphate/water dikinase regulatory protein family. PSRP subfamily.

The catalysed reaction is [pyruvate, water dikinase] + ADP = [pyruvate, water dikinase]-phosphate + AMP + H(+). It catalyses the reaction [pyruvate, water dikinase]-phosphate + phosphate + H(+) = [pyruvate, water dikinase] + diphosphate. Functionally, bifunctional serine/threonine kinase and phosphorylase involved in the regulation of the phosphoenolpyruvate synthase (PEPS) by catalyzing its phosphorylation/dephosphorylation. In Stenotrophomonas maltophilia (strain R551-3), this protein is Putative phosphoenolpyruvate synthase regulatory protein.